A 266-amino-acid chain; its full sequence is Putative tyrosine phosphatase 197R (266 aa).

One can recognise a Tyrosine-protein phosphatase domain in the interval 15–167; the sequence is RPTLGSLSDK…LFGSQNINND (153 aa). C111 functions as the Phosphocysteine intermediate in the catalytic mechanism.

This sequence belongs to the protein-tyrosine phosphatase family.

The catalysed reaction is O-phospho-L-tyrosyl-[protein] + H2O = L-tyrosyl-[protein] + phosphate. This chain is Putative tyrosine phosphatase 197R, found in Invertebrate iridescent virus 6 (IIV-6).